The following is a 278-amino-acid chain: Hydroxyethylthiazole kinase (278 aa).

Met46 contacts substrate. ATP-binding residues include Arg122 and Thr168. A substrate-binding site is contributed by Gly195.

It belongs to the Thz kinase family. Mg(2+) serves as cofactor.

The enzyme catalyses 5-(2-hydroxyethyl)-4-methylthiazole + ATP = 4-methyl-5-(2-phosphooxyethyl)-thiazole + ADP + H(+). It participates in cofactor biosynthesis; thiamine diphosphate biosynthesis; 4-methyl-5-(2-phosphoethyl)-thiazole from 5-(2-hydroxyethyl)-4-methylthiazole: step 1/1. Functionally, catalyzes the phosphorylation of the hydroxyl group of 4-methyl-5-beta-hydroxyethylthiazole (THZ). This chain is Hydroxyethylthiazole kinase, found in Chloroflexus aggregans (strain MD-66 / DSM 9485).